Reading from the N-terminus, the 106-residue chain is Large ribosomal subunit protein uL24 (106 aa).

This sequence belongs to the universal ribosomal protein uL24 family. As to quaternary structure, part of the 50S ribosomal subunit.

One of two assembly initiator proteins, it binds directly to the 5'-end of the 23S rRNA, where it nucleates assembly of the 50S subunit. In terms of biological role, one of the proteins that surrounds the polypeptide exit tunnel on the outside of the subunit. This chain is Large ribosomal subunit protein uL24, found in Paracidovorax citrulli (strain AAC00-1) (Acidovorax citrulli).